The chain runs to 607 residues: MRVLYIHAERFSWESREPALDIRDEPGSGAAANALVVFVSVERGDSSDEEFLRRVARDVVETAEKVKATAVVIYPYAHLSNDLARPYVAKEVVNKLYEVVKSEFKGEVYKAPFGYYKAFEVKCLGHPLAELSRSFKPEEARVAKAVEERRDVYLVLTPDGREHDPAAYSPADPDLKALIDKEVFKRELGGGEPRYLDYLRKFGFEWEPMSDVGHMRYGPEATVMMELVEDYAYQVAKSLGIPVFKIRGTNMFKLSEKAIETHARLFGERLYIVESDTDLILRYAACFQQFAMAKDWVISYRNLPFGMLEIADSYRHEQPGETVVLFRLRRFYMPDLHIFTKDLAEAVEVSYKVHEAIFREIGKLGRTYVSLYNVTEEFYKSHRDYLVELARREGKPILVRILPTQKYYWVLNVEYHIVDELGRPREIATFQIDVGNAQRFGIKYVDENNQVKYPVIIHTAIIGSVERYLYAVFDTIAKAEREGKTPRLPTWLAPVQVRIIPVARDNLKFAMEVADKLEEAGIRVDVDDRDETLSKRIRDAETSWVPYVCVVGSKEEETGTLSVRIRGEGQAKMTAEELIKRVREETRGYPTRPLYLPRLLSQRPTRG.

The tract at residues 1 to 143 is editing domain; sequence MRVLYIHAER…SFKPEEARVA (143 aa). 2 catalytic regions span residues 193–489 and 194–489; these read PRYL…PRLP and RYLD…PRLP. Positions 286, 337, and 458 each coordinate Zn(2+).

Belongs to the class-II aminoacyl-tRNA synthetase family. As to quaternary structure, homodimer. Zn(2+) is required as a cofactor.

The protein localises to the cytoplasm. The enzyme catalyses tRNA(Thr) + L-threonine + ATP = L-threonyl-tRNA(Thr) + AMP + diphosphate + H(+). In terms of biological role, catalyzes the attachment of threonine to tRNA(Thr) in a two-step reaction: L-threonine is first activated by ATP to form Thr-AMP and then transferred to the acceptor end of tRNA(Thr). Also edits incorrectly charged L-seryl-tRNA(Thr). This chain is Threonine--tRNA ligase, found in Pyrobaculum calidifontis (strain DSM 21063 / JCM 11548 / VA1).